We begin with the raw amino-acid sequence, 130 residues long: Small ribosomal subunit protein uS9 (130 aa).

The protein belongs to the universal ribosomal protein uS9 family.

The protein is Small ribosomal subunit protein uS9 of Pseudomonas fluorescens (strain ATCC BAA-477 / NRRL B-23932 / Pf-5).